We begin with the raw amino-acid sequence, 226 residues long: Thioredoxin domain-containing protein 9 (226 aa).

Positions Glu75 to Gly180 constitute a Thioredoxin domain. Phosphoserine occurs at positions 188, 221, and 223.

As to quaternary structure, forms ternary complexes with the chaperonin TCP1 complex, spanning the cylindrical chaperonin cavity and contacting at least 2 subunits.

It localises to the cytoplasm. It is found in the nucleus. The protein resides in the cytoskeleton. The protein localises to the microtubule organizing center. Its subcellular location is the centrosome. It localises to the midbody. Its function is as follows. Significantly diminishes the chaperonin TCP1 complex ATPase activity, thus negatively impacts protein folding, including that of actin or tubulin. The polypeptide is Thioredoxin domain-containing protein 9 (Txndc9) (Rattus norvegicus (Rat)).